Consider the following 1238-residue polypeptide: ATP-dependent helicase/nuclease subunit A (1238 aa).

One can recognise a UvrD-like helicase ATP-binding domain in the interval 12 to 490 (VSWTDDQWKA…IDLNANFRSR (479 aa)). ATP is bound at residue 33–40 (AAAGSGKT). One can recognise a UvrD-like helicase C-terminal domain in the interval 510–818 (GEILYDDNAS…RLVTIHSSKG (309 aa)).

This sequence belongs to the helicase family. AddA subfamily. Heterodimer of AddA and AddB/RexB. The cofactor is Mg(2+).

It carries out the reaction Couples ATP hydrolysis with the unwinding of duplex DNA by translocating in the 3'-5' direction.. The catalysed reaction is ATP + H2O = ADP + phosphate + H(+). In terms of biological role, the heterodimer acts as both an ATP-dependent DNA helicase and an ATP-dependent, dual-direction single-stranded exonuclease. Recognizes the chi site generating a DNA molecule suitable for the initiation of homologous recombination. The AddA nuclease domain is required for chi fragment generation; this subunit has the helicase and 3' -&gt; 5' nuclease activities. This is ATP-dependent helicase/nuclease subunit A from Lysinibacillus sphaericus (strain C3-41).